Consider the following 404-residue polypeptide: Putative transporter AmpG 2 (404 aa).

12 helical membrane passes run 11-31, 49-69, 84-104, 109-129, 154-174, 177-197, 224-244, 261-281, 294-311, 315-337, 353-373, and 378-398; these read IYNI…YLLT, IGLF…GPLL, YCLI…TGFN, FISF…YDML, FRIG…IISW, VYRT…FYPL, WLII…LAVM, LGYK…GGFL, VLVY…LYSY, ITTL…SPFF, IALI…ISGY, and LGWG…YILI.

This sequence belongs to the major facilitator superfamily.

Its subcellular location is the cell inner membrane. The protein is Putative transporter AmpG 2 (ampG2) of Rickettsia bellii (strain RML369-C).